Consider the following 81-residue polypeptide: CLAVATA3/ESR (CLE)-related protein 25 (81 aa).

An N-terminal signal peptide occupies residues 1–30 (MGGNGIRALVGVIASLGLIVFLLVGILANS). The interval 57–81 (KRKVPNGPDPIHNRKAETSRRPPRV) is disordered. Hydroxyproline is present on residues proline 61 and proline 64. O-linked (Ara...) hydroxyproline glycosylation occurs at proline 64. The segment covering 67-81 (IHNRKAETSRRPPRV) has biased composition (basic and acidic residues).

Belongs to the CLV3/ESR signal peptide family. Post-translationally, the O-glycosylation (arabinosylation) of the hydroxyproline Pro-64 enhances binding affinity of the CLE25p peptide for its receptor. In terms of tissue distribution, mostly expressed in flowers and siliques, and, to a lower extent, in roots, stems, apex, seedlings, leaves and pollen.

The protein localises to the secreted. Its subcellular location is the extracellular space. Functionally, extracellular signal peptide that regulates cell fate. Represses root apical meristem maintenance. Regulates the transition of protophloem cells from proliferation to differentiation, thus impinging on postembryonic growth capacity of the root meristem; this signaling pathway requires CRN and CLV2. The protein is CLAVATA3/ESR (CLE)-related protein 25 of Arabidopsis thaliana (Mouse-ear cress).